A 354-amino-acid polypeptide reads, in one-letter code: UDP-3-O-acylglucosamine N-acyltransferase (354 aa).

Catalysis depends on histidine 247, which acts as the Proton acceptor.

It belongs to the transferase hexapeptide repeat family. LpxD subfamily. As to quaternary structure, homotrimer.

The enzyme catalyses a UDP-3-O-[(3R)-3-hydroxyacyl]-alpha-D-glucosamine + a (3R)-hydroxyacyl-[ACP] = a UDP-2-N,3-O-bis[(3R)-3-hydroxyacyl]-alpha-D-glucosamine + holo-[ACP] + H(+). The protein operates within bacterial outer membrane biogenesis; LPS lipid A biosynthesis. Catalyzes the N-acylation of UDP-3-O-acylglucosamine using 3-hydroxyacyl-ACP as the acyl donor. Is involved in the biosynthesis of lipid A, a phosphorylated glycolipid that anchors the lipopolysaccharide to the outer membrane of the cell. This is UDP-3-O-acylglucosamine N-acyltransferase from Chlamydia trachomatis serovar A (strain ATCC VR-571B / DSM 19440 / HAR-13).